The sequence spans 109 residues: MNINVDVKQNENDIQVNIAGEIDVYSAPVLREKLVPLAEQGADLRICLKDVSYMDSTGLGVFVGTFKMVKKQGGSLKLENLSERLIRLFDITGLKDIIDISAKSEGGVQ.

The region spanning 3–109 (INVDVKQNEN…ISAKSEGGVQ (107 aa)) is the STAS domain. Phosphoserine is present on residues Ser52 and Ser56. The residue at position 57 (Thr57) is a Phosphothreonine.

This sequence belongs to the anti-sigma-factor antagonist family. Monomer. In stressed cells, forms a complex with RsbW. The predominant form of this complex has a stoichiometry of 2:2 (one dimer of RsbW is bound by two monomers of RsbV). Binds to RsbW in the presence of low levels of ATP or under conditions of energy or environmental stress (through dephosphorylation by RsbP or RsbU). In terms of processing, phosphorylated by RsbW on a serine residue. Dephosphorylated by RsbP or RsbU.

Its function is as follows. Positive regulator of sigma-B activity. Non-phosphorylated RsbV binds to RsbW, preventing its association with sigma-B. When phosphorylated, releases RsbW, which is then free to complex with and inactivate sigma-B. The sequence is that of Anti-sigma-B factor antagonist (rsbV) from Bacillus subtilis (strain 168).